The following is a 335-amino-acid chain: MHSHHSHSGDYSAHGTDPLDSVVDQVVNLNFHTYCLTEHIPRIEAKFIYPEEQSLGKNPEEVITKLETSFKNFMSHAQEIKTRYADRPDVRTKFIIGMEIESCDMAHIEYAKRLMKENNDILKFCVGSVHHVNGIPIDFDQQQWYNSLHSFNDNLKHFLLSYFQSQYEMLINIKPLVVGHFDLYKLFLPNDMLVNQKSGNCNEETGVPVASLDVISEWPEIYDAVVRNLQFIDSYGGAIEINTSALRKRLEEPYPSKTLCNLVKKHCGSRFVLSDDAHGVAQVGVCYDKVKKYIVDVLQLEYICYLEESQSPENLLTVKRLPISQFVNDPFWANI.

Belongs to the PHP hydrolase family. HisK subfamily.

It catalyses the reaction L-histidinol phosphate + H2O = L-histidinol + phosphate. The protein operates within amino-acid biosynthesis; L-histidine biosynthesis; L-histidine from 5-phospho-alpha-D-ribose 1-diphosphate: step 8/9. This is Histidinol-phosphatase (HIS2) from Saccharomyces cerevisiae (strain ATCC 204508 / S288c) (Baker's yeast).